Consider the following 173-residue polypeptide: uncharacterized protein (173 aa).

The propeptide at 1–15 (MERKLSQRAGNTFKG) is leader sequence. Phe16 is subject to N-methylphenylalanine. The chain crosses the membrane as a helical span at residues 16 to 37 (FTLVEVLITLAIISLVFSLILI).

Its subcellular location is the membrane. This is an uncharacterized protein from Aquifex aeolicus (strain VF5).